The following is a 1219-amino-acid chain: FK506-binding protein 15 (1219 aa).

N-acetylmethionine is present on Met-1. 2 positions are modified to phosphoserine: Ser-14 and Ser-23. The disordered stretch occupies residues 41–66; that stretch reads YTAPKQPKKGQGTAATGNQATPKTAP. The segment covering 53 to 66 has biased composition (polar residues); it reads TAATGNQATPKTAP. The tract at residues 72–169 is important for function in growth cone organization; that stretch reads PTILVATAVH…AVEFNKQVCI (98 aa). N6-acetyllysine is present on Lys-92. The PPIase FKBP-type domain maps to 197 to 290; sequence GDSLEVAYTG…VFEVEVRRVK (94 aa). A disordered region spans residues 294-349; it reads DSGSDGHSVSSRDSAAPSPIPGADNLSADPVVSPPTSIPFKSGEPALRTKSNSLSE. Phosphoserine occurs at positions 307, 311, 326, 344, 346, and 356. Positions 381–433 are disordered; it reads PQLDSNDSEIEDVNTLQGGGQPVVTPSVQPSLHPAHPALPQMTSQAPQPSVTG. The span at 421-433 shows a compositional bias: polar residues; that stretch reads QMTSQAPQPSVTG. Coiled coils occupy residues 522–789, 818–878, and 925–951; these read AVSK…TDQA, DEHL…GVEA, and TLQLLNQQEQEKEESSSEEEEEKAEER. A Phosphoserine modification is found at Ser-619. The tract at residues 739–761 is disordered; the sequence is LEKNLSERKKKSAQERSQAEEEI. The segment at 931–1219 is disordered; the sequence is QQEQEKEESS…DDDDDIDWLG (289 aa). 4 positions are modified to phosphoserine: Ser-939, Ser-940, Ser-941, and Ser-956. Low complexity predominate over residues 957 to 971; sequence QEQSASASSGQPQAP. Phosphoserine occurs at positions 979, 1024, 1056, 1061, 1065, and 1097. Residues 1090 to 1100 show a composition bias toward polar residues; sequence QESSTRLSLTS. A Phosphothreonine modification is found at Thr-1099. Phosphoserine is present on Ser-1114. Over residues 1123 to 1139 the composition is skewed to basic and acidic residues; sequence LKKDDVTSSTGPHKELS. A phosphoserine mark is found at Ser-1158, Ser-1161, Ser-1162, Ser-1164, and Ser-1195. Thr-1203 is subject to Phosphothreonine. The span at 1207–1219 shows a compositional bias: acidic residues; that stretch reads GDDDDDDDIDWLG.

This sequence belongs to the FKBP-type PPIase family. As to quaternary structure, interacts with WIP and actin. Interacts with TBC1D23.

The protein localises to the cytoplasm. The protein resides in the cell projection. Its subcellular location is the axon. It is found in the early endosome. May be involved in the cytoskeletal organization of neuronal growth cones. Seems to be inactive as a PPIase. Involved in the transport of early endosomes at the level of transition between microfilament-based and microtubule-based movement. In Homo sapiens (Human), this protein is FK506-binding protein 15 (FKBP15).